The following is a 129-amino-acid chain: Cytochrome b5 (129 aa).

A Cytochrome b5 heme-binding domain is found at 8 to 84; that stretch reads TTIYTHEEVA…LEKLYIGNLK (77 aa). Heme contacts are provided by His43 and His67. Residues 104–124 traverse the membrane as a helical segment; it reads GINFPLIAVGVFLAAFGVYYY.

This sequence belongs to the cytochrome b5 family.

It localises to the endoplasmic reticulum membrane. Its subcellular location is the microsome membrane. Membrane bound hemoprotein which function as an electron carrier for several membrane bound oxygenases. The chain is Cytochrome b5 (Cytb5) from Candida tropicalis (Yeast).